The primary structure comprises 136 residues: Large ribosomal subunit protein eL27B (136 aa).

This sequence belongs to the eukaryotic ribosomal protein eL27 family. In terms of assembly, component of the large ribosomal subunit (LSU). Mature yeast ribosomes consist of a small (40S) and a large (60S) subunit. The 40S small subunit contains 1 molecule of ribosomal RNA (18S rRNA) and 33 different proteins (encoded by 57 genes). The large 60S subunit contains 3 rRNA molecules (25S, 5.8S and 5S rRNA) and 46 different proteins (encoded by 81 genes).

The protein localises to the cytoplasm. Functionally, component of the ribosome, a large ribonucleoprotein complex responsible for the synthesis of proteins in the cell. The small ribosomal subunit (SSU) binds messenger RNAs (mRNAs) and translates the encoded message by selecting cognate aminoacyl-transfer RNA (tRNA) molecules. The large subunit (LSU) contains the ribosomal catalytic site termed the peptidyl transferase center (PTC), which catalyzes the formation of peptide bonds, thereby polymerizing the amino acids delivered by tRNAs into a polypeptide chain. The nascent polypeptides leave the ribosome through a tunnel in the LSU and interact with protein factors that function in enzymatic processing, targeting, and the membrane insertion of nascent chains at the exit of the ribosomal tunnel. In Saccharomyces cerevisiae (strain ATCC 204508 / S288c) (Baker's yeast), this protein is Large ribosomal subunit protein eL27B.